The chain runs to 725 residues: Glutamine-dependent NAD(+) synthetase (725 aa).

The 271-residue stretch at 5–275 (VTVATCALNQ…VEVLTATLDL (271 aa)) folds into the CN hydrolase domain. Glu-45 serves as the catalytic Proton acceptor; for glutaminase activity. Lys-114 serves as the catalytic For glutaminase activity. Residue Cys-175 is the Nucleophile; for glutaminase activity of the active site. Residues 325-706 (YHRPEEEISL…KASQTREEQV (382 aa)) are ligase. 355–362 (PLSGGVDS) serves as a coordination point for ATP. Ser-357 is a catalytic residue.

This sequence in the C-terminal section; belongs to the NAD synthetase family. In terms of assembly, homohexamer. As to expression, highly expressed in small intestine, kidney, liver and testis. Weakly expressed in skeletal muscle, spleen, lung, heart and brain.

The catalysed reaction is deamido-NAD(+) + L-glutamine + ATP + H2O = L-glutamate + AMP + diphosphate + NAD(+) + H(+). The protein operates within cofactor biosynthesis; NAD(+) biosynthesis; NAD(+) from deamido-NAD(+) (L-Gln route): step 1/1. Its function is as follows. Catalyzes the final step of the nicotinamide adenine dinucleotide (NAD) de novo synthesis pathway, the ATP-dependent amidation of deamido-NAD using L-glutamine as a nitrogen source. The sequence is that of Glutamine-dependent NAD(+) synthetase (Nadsyn1) from Mus musculus (Mouse).